The primary structure comprises 671 residues: DNA ligase (671 aa).

NAD(+) contacts are provided by residues 31–35 (DAEYD), 80–81 (SL), and glutamate 110. Lysine 112 (N6-AMP-lysine intermediate) is an active-site residue. Positions 133, 167, 283, and 307 each coordinate NAD(+). 4 residues coordinate Zn(2+): cysteine 401, cysteine 404, cysteine 419, and cysteine 424. Positions 587-671 (EEELVFAGKT…YLPDEGGLNE (85 aa)) constitute a BRCT domain.

Belongs to the NAD-dependent DNA ligase family. LigA subfamily. Mg(2+) serves as cofactor. The cofactor is Mn(2+).

It catalyses the reaction NAD(+) + (deoxyribonucleotide)n-3'-hydroxyl + 5'-phospho-(deoxyribonucleotide)m = (deoxyribonucleotide)n+m + AMP + beta-nicotinamide D-nucleotide.. Functionally, DNA ligase that catalyzes the formation of phosphodiester linkages between 5'-phosphoryl and 3'-hydroxyl groups in double-stranded DNA using NAD as a coenzyme and as the energy source for the reaction. It is essential for DNA replication and repair of damaged DNA. This chain is DNA ligase, found in Listeria monocytogenes serotype 4b (strain CLIP80459).